The following is a 57-amino-acid chain: Large ribosomal subunit protein bL32 (57 aa).

It belongs to the bacterial ribosomal protein bL32 family.

The polypeptide is Large ribosomal subunit protein bL32 (Bacillus licheniformis (strain ATCC 14580 / DSM 13 / JCM 2505 / CCUG 7422 / NBRC 12200 / NCIMB 9375 / NCTC 10341 / NRRL NRS-1264 / Gibson 46)).